Consider the following 954-residue polypeptide: Valine--tRNA ligase (954 aa).

A 'HIGH' region motif is present at residues 48 to 58; sequence PNVTGSLHMGH. The 'KMSKS' region motif lies at 560–564; that stretch reads KMSKS. K563 is an ATP binding site. Residues 883-953 are a coiled coil; that stretch reads AGFINKEAEL…LKQQYLAIEA (71 aa).

It belongs to the class-I aminoacyl-tRNA synthetase family. ValS type 1 subfamily. As to quaternary structure, monomer.

The protein localises to the cytoplasm. The enzyme catalyses tRNA(Val) + L-valine + ATP = L-valyl-tRNA(Val) + AMP + diphosphate. Catalyzes the attachment of valine to tRNA(Val). As ValRS can inadvertently accommodate and process structurally similar amino acids such as threonine, to avoid such errors, it has a 'posttransfer' editing activity that hydrolyzes mischarged Thr-tRNA(Val) in a tRNA-dependent manner. This chain is Valine--tRNA ligase, found in Pasteurella multocida (strain Pm70).